We begin with the raw amino-acid sequence, 701 residues long: DNA ligase 2 (701 aa).

The span at methionine 1–proline 10 shows a compositional bias: polar residues. The disordered stretch occupies residues methionine 1 to alanine 21. Residues aspartate 64–aspartate 68, serine 111–leucine 112, and glutamate 133 each bind NAD(+). Lysine 135 functions as the N6-AMP-lysine intermediate in the catalytic mechanism. Residues arginine 156, glutamate 189, lysine 302, and lysine 326 each contribute to the NAD(+) site. Residues cysteine 420, cysteine 423, cysteine 436, and cysteine 441 each contribute to the Zn(2+) site. The segment covering lysine 603–proline 613 has biased composition (low complexity). A disordered region spans residues lysine 603–methionine 623. Residues leucine 615 to valine 701 form the BRCT domain.

Belongs to the NAD-dependent DNA ligase family. LigA subfamily. Mg(2+) serves as cofactor. The cofactor is Mn(2+).

It carries out the reaction NAD(+) + (deoxyribonucleotide)n-3'-hydroxyl + 5'-phospho-(deoxyribonucleotide)m = (deoxyribonucleotide)n+m + AMP + beta-nicotinamide D-nucleotide.. In terms of biological role, DNA ligase that catalyzes the formation of phosphodiester linkages between 5'-phosphoryl and 3'-hydroxyl groups in double-stranded DNA using NAD as a coenzyme and as the energy source for the reaction. It is essential for DNA replication and repair of damaged DNA. This is DNA ligase 2 from Pseudarthrobacter chlorophenolicus (strain ATCC 700700 / DSM 12829 / CIP 107037 / JCM 12360 / KCTC 9906 / NCIMB 13794 / A6) (Arthrobacter chlorophenolicus).